The primary structure comprises 239 residues: Purine nucleoside phosphorylase DeoD-type (239 aa).

A purine D-ribonucleoside is bound at residue H5. Residues G21, R25, R44, and 88 to 91 each bind phosphate; that span reads RVGS. A purine D-ribonucleoside contacts are provided by residues 180–182 and 204–205; these read EME and SD. D205 (proton donor) is an active-site residue.

The protein belongs to the PNP/UDP phosphorylase family. As to quaternary structure, homohexamer; trimer of homodimers.

The catalysed reaction is a purine D-ribonucleoside + phosphate = a purine nucleobase + alpha-D-ribose 1-phosphate. The enzyme catalyses a purine 2'-deoxy-D-ribonucleoside + phosphate = a purine nucleobase + 2-deoxy-alpha-D-ribose 1-phosphate. Functionally, catalyzes the reversible phosphorolytic breakdown of the N-glycosidic bond in the beta-(deoxy)ribonucleoside molecules, with the formation of the corresponding free purine bases and pentose-1-phosphate. The sequence is that of Purine nucleoside phosphorylase DeoD-type from Salmonella heidelberg (strain SL476).